The primary structure comprises 188 residues: F7-2 fimbrial protein (188 aa).

The signal sequence occupies residues 1–21; it reads MIKSVIAGAVAMAVVSFGAYA. The cysteines at positions 43 and 82 are disulfide-linked.

The protein belongs to the fimbrial protein family.

The protein resides in the fimbrium. Its function is as follows. Fimbriae (also called pili), polar filaments radiating from the surface of the bacterium to a length of 0.5-1.5 micrometers and numbering 100-300 per cell, enable bacteria to colonize the epithelium of specific host organs. This is F7-2 fimbrial protein (F7-2) from Escherichia coli O6:H1 (strain CFT073 / ATCC 700928 / UPEC).